Consider the following 72-residue polypeptide: Metallothionein-like protein type 2 A (72 aa).

It belongs to the metallothionein superfamily. Type 15 family. As to expression, leaves and roots.

Functionally, metallothioneins have a high content of cysteine residues that bind various heavy metals. The polypeptide is Metallothionein-like protein type 2 A (MTA) (Solanum lycopersicum (Tomato)).